The primary structure comprises 319 residues: GCN5-related N-acetyltransferase 5, chloroplastic (319 aa).

The transit peptide at 1–55 (MAALSISLAFSVDSLKPTQSTKFGFSSSSHRYPLLYSCKSHRSNLRFAFPPSSVS) directs the protein to the chloroplast. Residues 109 to 297 (MWVRVMRHEE…KHLMRKKLLP (189 aa)) enclose the N-acetyltransferase domain. Residues 218-220 (MTV), 226-231 (RRGIGW), 258-260 (DEA), and Tyr265 each bind acetyl-CoA. The active-site Proton donor is the Tyr265.

The protein belongs to the acetyltransferase family. GNAT subfamily. In terms of assembly, oligomer. Post-translationally, autoacetylated. In terms of tissue distribution, expressed in green tissues.

It is found in the plastid. It localises to the chloroplast. The catalysed reaction is an N-terminal L-alpha-aminoacyl-[protein] + acetyl-CoA = N-terminal N(alpha)-acetyl-L-alpha-aminoacyl-[protein] + CoA + H(+). It catalyses the reaction L-lysyl-[protein] + acetyl-CoA = N(6)-acetyl-L-lysyl-[protein] + CoA + H(+). It carries out the reaction N-terminal L-alanyl-[protein] + acetyl-CoA = N-terminal N(alpha)-acetyl-L-alanyl-[protein] + CoA + H(+). The enzyme catalyses N-terminal L-seryl-[protein] + acetyl-CoA = N-terminal N(alpha)-acetyl-L-seryl-[protein] + CoA + H(+). The catalysed reaction is N-terminal L-methionyl-[protein] + acetyl-CoA = N-terminal N(alpha)-acetyl-L-methionyl-[protein] + CoA + H(+). It catalyses the reaction N-terminal L-valyl-[protein] + acetyl-CoA = N-terminal N(alpha)-acetyl-L-valyl-[protein] + CoA + H(+). It carries out the reaction N-terminal L-threonyl-[protein] + acetyl-CoA = N-terminal N(alpha)-acetyl-L-threonyl-[protein] + CoA + H(+). In terms of biological role, protein acetyltransferase with dual specificity triggering both N-alpha-acetylation (NTA), with a large spectrum of modified N-termini, including methionine, alanine, serine and to a lower extent threonine and valine as substrates, and epsilon-lysine acetylation (KA). The chain is GCN5-related N-acetyltransferase 5, chloroplastic from Arabidopsis thaliana (Mouse-ear cress).